The sequence spans 262 residues: Pyridoxine 5'-phosphate synthase (262 aa).

Asn6 lines the 3-amino-2-oxopropyl phosphate pocket. 8–9 serves as a coordination point for 1-deoxy-D-xylulose 5-phosphate; it reads DH. A 3-amino-2-oxopropyl phosphate-binding site is contributed by Arg17. His43 (proton acceptor) is an active-site residue. 1-deoxy-D-xylulose 5-phosphate contacts are provided by Arg45 and His50. Glu70 (proton acceptor) is an active-site residue. Thr102 is a binding site for 1-deoxy-D-xylulose 5-phosphate. His215 (proton donor) is an active-site residue. Residues Gly216 and 237–238 each bind 3-amino-2-oxopropyl phosphate; that span reads GH.

Belongs to the PNP synthase family. Homooctamer; tetramer of dimers.

It is found in the cytoplasm. The enzyme catalyses 3-amino-2-oxopropyl phosphate + 1-deoxy-D-xylulose 5-phosphate = pyridoxine 5'-phosphate + phosphate + 2 H2O + H(+). It functions in the pathway cofactor biosynthesis; pyridoxine 5'-phosphate biosynthesis; pyridoxine 5'-phosphate from D-erythrose 4-phosphate: step 5/5. In terms of biological role, catalyzes the complicated ring closure reaction between the two acyclic compounds 1-deoxy-D-xylulose-5-phosphate (DXP) and 3-amino-2-oxopropyl phosphate (1-amino-acetone-3-phosphate or AAP) to form pyridoxine 5'-phosphate (PNP) and inorganic phosphate. This Helicobacter pylori (strain Shi470) protein is Pyridoxine 5'-phosphate synthase.